The following is a 320-amino-acid chain: ATP-dependent 6-phosphofructokinase isozyme 1 (320 aa).

Glycine 12 is an ATP binding site. Residues 22-26 and 55-60 contribute to the ADP site; these read RGVVR and RYSVSD. Residues 73–74 and 103–106 each bind ATP; these read RF and GDGS. Residue aspartate 104 coordinates Mg(2+). A substrate-binding site is contributed by 126–128; sequence TID. The Proton acceptor role is filled by aspartate 128. Residue arginine 155 coordinates ADP. Substrate-binding positions include arginine 163 and 170–172; that span reads MGR. ADP contacts are provided by residues 186-188, lysine 212, and 214-216; these read GCE and KKH. Residues glutamate 223, arginine 244, and 250–253 each bind substrate; that span reads HIQR.

The protein belongs to the phosphofructokinase type A (PFKA) family. ATP-dependent PFK group I subfamily. Prokaryotic clade 'B1' sub-subfamily. In terms of assembly, homotetramer. Mg(2+) serves as cofactor.

The protein localises to the cytoplasm. The catalysed reaction is beta-D-fructose 6-phosphate + ATP = beta-D-fructose 1,6-bisphosphate + ADP + H(+). It participates in carbohydrate degradation; glycolysis; D-glyceraldehyde 3-phosphate and glycerone phosphate from D-glucose: step 3/4. With respect to regulation, allosterically activated by ADP and other diphosphonucleosides, and allosterically inhibited by phosphoenolpyruvate. Catalyzes the phosphorylation of D-fructose 6-phosphate to fructose 1,6-bisphosphate by ATP, the first committing step of glycolysis. The sequence is that of ATP-dependent 6-phosphofructokinase isozyme 1 from Shigella boydii serotype 18 (strain CDC 3083-94 / BS512).